A 586-amino-acid chain; its full sequence is Non-structural glycoprotein GNS (586 aa).

The first 14 residues, 1-14, serve as a signal peptide directing secretion; sequence MFLQLFNIVLIYGV. The Extracellular segment spans residues 15–544; the sequence is RTSQSTWINY…QNKEYWNEES (530 aa). 8 N-linked (GlcNAc...) asparagine; by host glycosylation sites follow: asparagine 27, asparagine 68, asparagine 274, asparagine 350, asparagine 383, asparagine 476, asparagine 501, and asparagine 521. Residues 545-562 form a helical membrane-spanning segment; the sequence is SIWGISTIITVLGIYYIY. At 563 to 586 the chain is on the cytoplasmic side; that stretch reads RKNRREKIFLNMKHRVQRFFKLDY.

It belongs to the ephemerovirus glycoprotein family.

It is found in the host membrane. In Bos taurus (Bovine), this protein is Non-structural glycoprotein GNS (GNS).